The following is a 348-amino-acid chain: NADH-ubiquinone oxidoreductase chain 2 (348 aa).

11 helical membrane passes run 1 to 21 (MNPYVLMILMSSLGLGTTLTF), 25 to 45 (HWILAWMGLEINTLAIVPLMA), 60 to 80 (FLIQAAAAAMILFTSTTNAWI), 99 to 119 (MFALALKIGLAPMHFWLPEVL), 124 to 144 (LLTGLILSTWQKLAPMALIIQ), 151 to 171 (PLILTSLGIASSLIGGWSGLN), 178 to 197 (ILAYSSIAHMGWMIIVIQYA), 202 to 224 (LIALGTYIFMTSAAFLTLKVLSA), 239 to 259 (ILAAIATLVMLSLGGLPPLTG), 274 to 294 (DLPATATIMALTALLSLFFYL), and 326 to 346 (LTISVTVTMGLLPLTPAILML).

It belongs to the complex I subunit 2 family. In terms of assembly, core subunit of respiratory chain NADH dehydrogenase (Complex I) which is composed of 45 different subunits.

The protein localises to the mitochondrion inner membrane. It carries out the reaction a ubiquinone + NADH + 5 H(+)(in) = a ubiquinol + NAD(+) + 4 H(+)(out). Its function is as follows. Core subunit of the mitochondrial membrane respiratory chain NADH dehydrogenase (Complex I) which catalyzes electron transfer from NADH through the respiratory chain, using ubiquinone as an electron acceptor. Essential for the catalytic activity and assembly of complex I. The polypeptide is NADH-ubiquinone oxidoreductase chain 2 (mt-nd2) (Danio rerio (Zebrafish)).